The following is a 587-amino-acid chain: Folylpolyglutamate synthase, mitochondrial (587 aa).

A mitochondrion-targeting transit peptide spans 1–42; sequence MSWARSRLCSTLSLAAVSARGATTEGAARRGMSAWPAPQEPG. ATP is bound at residue 106–109; it reads GKGS. Ser130, Glu200, and His228 together coordinate Mg(2+). 2 residues coordinate ATP: Arg363 and Asp377. Ser539 carries the phosphoserine modification.

It belongs to the folylpolyglutamate synthase family. In terms of assembly, monomer. A monovalent cation serves as cofactor. With non-specific probe, highest content in kidney and liver and lowest in spleen, lung and small intestine, and readily detectable in all of the tumors except hepatoma. Isoform 1 and isoform 2 expressed in leukemic cells and isoform 4 and isoform 5 in liver cells. Isoform 1 and isoform 2 exclusively expressed in hepatoma and Lewis lung carcinoma. Isoform 1 and isoform 2 also expressed in bone marrow, small intestine and spleen. Kidney expresses isoform 1, isoform 2, isoform 4 and isoform 5.

The protein localises to the mitochondrion inner membrane. The protein resides in the mitochondrion matrix. Its subcellular location is the cytoplasm. The catalysed reaction is (6S)-5,6,7,8-tetrahydrofolyl-(gamma-L-Glu)(n) + L-glutamate + ATP = (6S)-5,6,7,8-tetrahydrofolyl-(gamma-L-Glu)(n+1) + ADP + phosphate + H(+). Its pathway is cofactor biosynthesis; tetrahydrofolylpolyglutamate biosynthesis. Its activity is regulated as follows. Inhibited by ammonium sulfate. Inhibited by pentaglutamate derivative of DDATHF, but isoform 2 is inhibited to a greater extent at lower concentrations of the compound that is isoform 5. Isoform 5 is virtually unaffected by H(4)PteGlu(5) and 5,10-CH(2)-H(4)PteGlu(5) at concentrations that substantially inhibits the activity of isoform 2. Isoform 2 and 5 are equally sensitive to polyglutamates of 10-CHO-H(4)-PteGlu. Catalyzes conversion of folates to polyglutamate derivatives allowing concentration of folate compounds in the cell and the intracellular retention of these cofactors, which are important substrates for most of the folate-dependent enzymes that are involved in one-carbon transfer reactions involved in purine, pyrimidine and amino acid synthesis. Dihydrofolate, tetrahydrofolate, 5,10-methylenetetrahydrofolate, 10-formyltetrahydrofolate and 5-formyltetrahydrofolate are the best substrates. Folic acid and 5-methyltetrahydrofolate can also act as substrates. In Mus musculus (Mouse), this protein is Folylpolyglutamate synthase, mitochondrial (Fpgs).